We begin with the raw amino-acid sequence, 250 residues long: ATP synthase subunit a (250 aa).

The next 6 membrane-spanning stretches (helical) occupy residues 26 to 46 (FTNA…FLYL), 84 to 104 (FFPM…LGMV), 114 to 134 (IIVT…YGFY), 143 to 163 (LFVP…IEII), 193 to 213 (FVAS…LPLI), and 216 to 236 (VALT…FAVL).

This sequence belongs to the ATPase A chain family. In terms of assembly, F-type ATPases have 2 components, CF(1) - the catalytic core - and CF(0) - the membrane proton channel. CF(1) has five subunits: alpha(3), beta(3), gamma(1), delta(1), epsilon(1). CF(0) has three main subunits: a(1), b(2) and c(9-12). The alpha and beta chains form an alternating ring which encloses part of the gamma chain. CF(1) is attached to CF(0) by a central stalk formed by the gamma and epsilon chains, while a peripheral stalk is formed by the delta and b chains.

It localises to the cell inner membrane. Key component of the proton channel; it plays a direct role in the translocation of protons across the membrane. In Sinorhizobium medicae (strain WSM419) (Ensifer medicae), this protein is ATP synthase subunit a.